A 63-amino-acid chain; its full sequence is Large ribosomal subunit protein bL28 (63 aa).

Belongs to the bacterial ribosomal protein bL28 family.

The sequence is that of Large ribosomal subunit protein bL28 from Geotalea daltonii (strain DSM 22248 / JCM 15807 / FRC-32) (Geobacter daltonii).